An 82-amino-acid polypeptide reads, in one-letter code: uncharacterized protein (82 aa).

The next 2 helical transmembrane spans lie at 22 to 39 (WASD…MFIA) and 46 to 65 (LKMG…TWVI).

It localises to the cell membrane. This is an uncharacterized protein from Bacillus subtilis (strain 168).